Consider the following 238-residue polypeptide: ATP synthase subunit a, chloroplastic (238 aa).

Helical transmembrane passes span 27 to 47 (GQVLITSWVVLGILAVLSFLG), 86 to 106 (VPFLGTIFLFIFVSNWSGALL), 125 to 145 (INTTVALALLTSISYFYAGIS), 190 to 210 (LVVGVLVALVPLIIPIPIMLL), and 211 to 231 (GVFTSAIQALVFATLAGAYIN).

It belongs to the ATPase A chain family. F-type ATPases have 2 components, F(1) - the catalytic core - and F(0) - the membrane proton channel. F(1) has five subunits: alpha(3), beta(3), gamma(1), delta(1), epsilon(1). F(0) has four main subunits: a(1), b(1), b'(1) and c(10-14). The alpha and beta chains form an alternating ring which encloses part of the gamma chain. F(1) is attached to F(0) by a central stalk formed by the gamma and epsilon chains, while a peripheral stalk is formed by the delta, b and b' chains.

The protein resides in the plastid. It is found in the chloroplast thylakoid membrane. In terms of biological role, f(1)F(0) ATP synthase produces ATP from ADP in the presence of a proton or sodium gradient. F-type ATPases consist of two structural domains, F(1) containing the extramembraneous catalytic core and F(0) containing the membrane proton channel, linked together by a central stalk and a peripheral stalk. During catalysis, ATP synthesis in the catalytic domain of F(1) is coupled via a rotary mechanism of the central stalk subunits to proton translocation. This chain is ATP synthase subunit a, chloroplastic, found in Chlamydomonas reinhardtii (Chlamydomonas smithii).